The primary structure comprises 310 residues: Porphobilinogen deaminase (310 aa).

Cys241 carries the post-translational modification S-(dipyrrolylmethanemethyl)cysteine.

It belongs to the HMBS family. In terms of assembly, monomer. Dipyrromethane serves as cofactor.

It catalyses the reaction 4 porphobilinogen + H2O = hydroxymethylbilane + 4 NH4(+). It participates in porphyrin-containing compound metabolism; protoporphyrin-IX biosynthesis; coproporphyrinogen-III from 5-aminolevulinate: step 2/4. Its function is as follows. Tetrapolymerization of the monopyrrole PBG into the hydroxymethylbilane pre-uroporphyrinogen in several discrete steps. The chain is Porphobilinogen deaminase from Pelobacter propionicus (strain DSM 2379 / NBRC 103807 / OttBd1).